The chain runs to 325 residues: Delta(1)-pyrroline-2-carboxylate reductase (325 aa).

Belongs to the ornithine cyclodeaminase/mu-crystallin family.

It catalyses the reaction L-proline + NAD(+) = 1-pyrroline-2-carboxylate + NADH + H(+). It carries out the reaction L-proline + NADP(+) = 1-pyrroline-2-carboxylate + NADPH + H(+). Functionally, catalyzes the reduction of Delta(1)-pyrroline-2-carboxylate (Pyr2C) to L-proline, using preferentially NADPH over NADH as the electron donor. Is likely involved in a degradation pathway that converts trans-3-hydroxy-L-proline (t3LHyp) to L-proline. The polypeptide is Delta(1)-pyrroline-2-carboxylate reductase (Bacillus cereus (strain ATCC 10987 / NRS 248)).